The following is a 499-amino-acid chain: Tetrathionate hydrolase (499 aa).

The N-terminal stretch at 1 to 32 (MPSIVRNHGPHNKILLSALLLALFGWVPLASA) is a signal peptide.

This sequence belongs to the tetrathionate hydrolase family. Homodimer.

The protein localises to the cell membrane. It carries out the reaction tetrathionate + H2O = sulfur + thiosulfate + sulfate + H(+). In terms of biological role, catalyzes the hydrolysis of tetrathionate to generate elemental sulfur, thiosulfate and sulfate. The sequence is that of Tetrathionate hydrolase from Acidithiobacillus ferrooxidans (strain ATCC 23270 / DSM 14882 / CIP 104768 / NCIMB 8455) (Ferrobacillus ferrooxidans (strain ATCC 23270)).